Here is a 1235-residue protein sequence, read N- to C-terminus: MHFRRTMSRVPTLASLEIRYKKSFGHKFRDFIALCGHYFAPVKKYIFPSFIAVHYFYTISLTLITSILLYPIKNTRYIDTLFLAAGAVTQGGLNTVDINNLSLYQQIVLYIVCCISTPIAVHSCLAFVRLYWFERYFDGIRDSSRRNFKMRRTKTILERELTARTMTKNRTGTQRTSYPRKQAKTDDFQEKLFSGEMVNRDEQDSVHSDQNSHDISRDSSNNNTNHNGSSGSLDDFVKEDETDDNGEYQENNSYSTVGSSSNTVADESLNQKPKPSSLRFDEPHSKQRPARVPSEKFAKRRGSRDISPADMYRSIMMLQGKHEATAEDEGPPLVIGSPADGTRYKSNVNKLKKATGINGNKIKIRDKGNESNTDQNSVSSEANSTASVSDESSLHTNFGNKVPSLRTNTHRSNSGPIAITDNAETDKKHGPSIQFDITKPPRKISKRVSTFDDLNPKSSVLYRKKASKKYLMKHFPKARRIRQQIKRRLSTGSIEKNSSNNVSDRKPITDMDDDDDDDDNDGDNNEEYFADNESGDEDERVQQSEPHSDSELKSHQQQQEKHQLQQNLHRMYKTKSFDDNRSRAVPMERSRTIDMAEAKDLNELARTPDFQKMVYQNWKAHHRKKPNFRKRGWNNKIFEHGPYASDSDRNYPDNSNTGNSILHYAESILHHDGSHKNGSEEASSDSNENIYSTNGGSDHNGLNNYPTYNDDEEGYYGLHFDTDYDLDPRHDLSKGSGKTYLSWQPTIGRNSNFLGLTRAQKDELGGVEYRAIKLLCTILVVYYVGWHIVAFVMLVPWIILKKHYSEVVRDDGVSPTWWGFWTAMSAFNDLGLTLTPNSMMSFNKAVYPLIVMIWFIIIGNTGFPILLRCIIWIMFKISPDLSQMRESLGFLLDHPRRCFTLLFPKAATWWLLLTLAGLNITDWILFIILDFGSTVVKSLSKGYRVLVGLFQSVSTRTAGFSVVDLSQLHPSIQVSYMLMMYVSVLPLAISIRRTNVYEEQSLGLYGDMGGEPEDTDTEDDGNDEDDDEENESHEGQSSQRSSSNNNNNNNRKKKKKKKTENPNEISTKSFIGAHLRKQLSFDLWFLFLGLFIICICEGDKIKDVQEPNFNIFAILFEIVSAYGTVGLSLGYPDTNQSFSRQFTTLSKLVIIAMLIRGKNRGLPYSLDRAIILPSDRLEHIDHLEGMKLKRQARTNTEDPMTEHFKRSFTDVKHRWGALKRKTTHSRNPKRSSTTL.

Position 15 is a phosphoserine (Ser-15). Transmembrane regions (helical) follow at residues 49 to 70 (SFIA…ILLY) and 78 to 98 (IDTL…TVDI). The N-linked (GlcNAc...) asparagine glycan is linked to Asn-100. Residues 107-127 (IVLYIVCCISTPIAVHSCLAF) traverse the membrane as a helical segment. Disordered stretches follow at residues 161 to 310 (LTAR…SPAD), 323 to 344 (EATA…GTRY), 361 to 441 (KIKI…TKPP), and 488 to 565 (RLST…HQLQ). A compositionally biased stretch (polar residues) spans 164 to 179 (RTMTKNRTGTQRTSYP). Asn-169 is a glycosylation site (N-linked (GlcNAc...) asparagine). Over residues 198–217 (VNRDEQDSVHSDQNSHDISR) the composition is skewed to basic and acidic residues. Low complexity predominate over residues 219–232 (SSNNNTNHNGSSGS). N-linked (GlcNAc...) asparagine glycans are attached at residues Asn-222 and Asn-227. Residues 237–247 (VKEDETDDNGE) are compositionally biased toward acidic residues. Residues 248-274 (YQENNSYSTVGSSSNTVADESLNQKPK) are compositionally biased toward polar residues. Asn-251 carries N-linked (GlcNAc...) asparagine glycosylation. Residues Asn-369 and Asn-383 are each glycosylated (N-linked (GlcNAc...) asparagine). Polar residues-rich tracts occupy residues 370 to 415 (ESNT…SNSG) and 490 to 502 (STGS…SNNV). Ser-414 is subject to Phosphoserine. 3 N-linked (GlcNAc...) asparagine glycosylation sites follow: Asn-497, Asn-501, and Asn-532. Residues 510–539 (DMDDDDDDDDNDGDNNEEYFADNESGDEDE) are compositionally biased toward acidic residues. Ser-534 is modified (phosphoserine). A compositionally biased stretch (basic and acidic residues) spans 540 to 563 (RVQQSEPHSDSELKSHQQQQEKHQ). N-linked (GlcNAc...) asparagine glycans are attached at residues Asn-580 and Asn-677. The disordered stretch occupies residues 671-706 (HDGSHKNGSEEASSDSNENIYSTNGGSDHNGLNNYP). Residues 680 to 706 (EEASSDSNENIYSTNGGSDHNGLNNYP) are compositionally biased toward polar residues. A run of 5 helical transmembrane segments spans residues 778–800 (ILVV…WIIL), 813–834 (VSPT…GLTL), 838–858 (SMMS…FIII), 862–882 (GFPI…PDLS), and 898–918 (CFTL…LAGL). N-linked (GlcNAc...) asparagine glycosylation is present at Asn-919. 2 consecutive transmembrane segments (helical) span residues 923–943 (WILF…SKGY) and 971–991 (SIQV…AISI). Residues 1003–1063 (GLYGDMGGEP…KKKKKTENPN (61 aa)) are disordered. Acidic residues predominate over residues 1010 to 1031 (GEPEDTDTEDDGNDEDDDEENE). Asn-1030 carries N-linked (GlcNAc...) asparagine glycosylation. Low complexity predominate over residues 1036 to 1049 (QSSQRSSSNNNNNN). The next 2 membrane-spanning stretches (helical) occupy residues 1078–1098 (QLSF…ICEG) and 1111–1131 (IFAI…SLGY). Asn-1135 carries N-linked (GlcNAc...) asparagine glycosylation.

This sequence belongs to the TrkH potassium transport family.

Its subcellular location is the membrane. Its function is as follows. This protein is required for high-affinity potassium transport. This chain is High-affinity potassium transport protein (TRK1), found in Saccharomyces cerevisiae (strain ATCC 204508 / S288c) (Baker's yeast).